The sequence spans 990 residues: Bifunctional glutamine synthetase adenylyltransferase/adenylyl-removing enzyme (990 aa).

The segment at Met-1–Gln-474 is adenylyl removase. The segment at Phe-484–Glu-990 is adenylyl transferase.

The protein belongs to the GlnE family. Mg(2+) serves as cofactor.

It catalyses the reaction [glutamine synthetase]-O(4)-(5'-adenylyl)-L-tyrosine + phosphate = [glutamine synthetase]-L-tyrosine + ADP. The enzyme catalyses [glutamine synthetase]-L-tyrosine + ATP = [glutamine synthetase]-O(4)-(5'-adenylyl)-L-tyrosine + diphosphate. Functionally, involved in the regulation of glutamine synthetase GlnA, a key enzyme in the process to assimilate ammonia. When cellular nitrogen levels are high, the C-terminal adenylyl transferase (AT) inactivates GlnA by covalent transfer of an adenylyl group from ATP to specific tyrosine residue of GlnA, thus reducing its activity. Conversely, when nitrogen levels are low, the N-terminal adenylyl removase (AR) activates GlnA by removing the adenylyl group by phosphorolysis, increasing its activity. The regulatory region of GlnE binds the signal transduction protein PII (GlnB) which indicates the nitrogen status of the cell. The polypeptide is Bifunctional glutamine synthetase adenylyltransferase/adenylyl-removing enzyme (Alteromonas mediterranea (strain DSM 17117 / CIP 110805 / LMG 28347 / Deep ecotype)).